The sequence spans 590 residues: MNKQLKEKLALLPDQPGCYLMKDRQKTVIYVGKAKVLKNRVRSYFTGSHDAKTQRLVSEIEDFEYIVTSSNLEALILEMNLIKKYDPKYNVMLKDDKTYPFIKITHERHPRLIVTRNVKKDKGRYFGPYPNVQAARETKKLLDRLYPLRKCSKLPDRVCLYYHLGQCLAPCVKDISEETNREIVEDITRFLKGGHNEIKKELEAKMAEAAEKLEFERAKEFRDQLAHIESTMEKQKMTMNDLLDRDVFAYAYDKGWMCVQVFFIRQGKLIERDVSMFPMYQEADEEFLTFIGQFYSKNNHFLPKEILVPDSVDRDMITELLETAVHQPKKGPKKELLLLAHKNAKIALREKFSLIERDEERSIGAAERLGEALNIYTPHRIEAFDNSNIQGTNPVSAMIVFIDGKPNKKEYRKYKIKTVTGPDDYGSMREVVRRRYTRVLRENLPLPDLIIIDGGKGQINAARDVLENELGLDVPVAGLAKDDKHRTSNLLIGDPLEPVFLERNSQEFYLLQRIQDEVHRFAISFHRQIRGKSVFQSVLDDIPGIGEKRKKMLLKHFGSVKKMKEASLDDIKKAGVPAAAAQLLFEKLKK.

The GIY-YIG domain occupies 14 to 91 (DQPGCYLMKD…IKKYDPKYNV (78 aa)). Residues 196-231 (NEIKKELEAKMAEAAEKLEFERAKEFRDQLAHIEST) enclose the UVR domain.

The protein belongs to the UvrC family. Interacts with UvrB in an incision complex.

The protein localises to the cytoplasm. In terms of biological role, the UvrABC repair system catalyzes the recognition and processing of DNA lesions. UvrC both incises the 5' and 3' sides of the lesion. The N-terminal half is responsible for the 3' incision and the C-terminal half is responsible for the 5' incision. This chain is UvrABC system protein C, found in Bacillus velezensis (strain DSM 23117 / BGSC 10A6 / LMG 26770 / FZB42) (Bacillus amyloliquefaciens subsp. plantarum).